We begin with the raw amino-acid sequence, 274 residues long: tRNA-cytidine(32) 2-sulfurtransferase (274 aa).

The PP-loop motif motif lies at 40–45; sequence SGGKDS. [4Fe-4S] cluster contacts are provided by Cys115, Cys118, and Cys206.

The protein belongs to the TtcA family. Homodimer. It depends on Mg(2+) as a cofactor. Requires [4Fe-4S] cluster as cofactor.

It is found in the cytoplasm. The enzyme catalyses cytidine(32) in tRNA + S-sulfanyl-L-cysteinyl-[cysteine desulfurase] + AH2 + ATP = 2-thiocytidine(32) in tRNA + L-cysteinyl-[cysteine desulfurase] + A + AMP + diphosphate + H(+). It functions in the pathway tRNA modification. Its function is as follows. Catalyzes the ATP-dependent 2-thiolation of cytidine in position 32 of tRNA, to form 2-thiocytidine (s(2)C32). The sulfur atoms are provided by the cysteine/cysteine desulfurase (IscS) system. The protein is tRNA-cytidine(32) 2-sulfurtransferase of Pseudomonas aeruginosa (strain LESB58).